Here is a 165-residue protein sequence, read N- to C-terminus: Fibrinogen-binding protein (165 aa).

An N-terminal signal peptide occupies residues 1–29; sequence MKNKLIAKSLLTIAAIGITTTTIASTADA.

As to quaternary structure, interacts with host fibrinogen alpha chain/FGA. Interacts with host complement protein C3.

The protein localises to the secreted. In terms of biological role, extracellular fibrinogen-binding protein that plays an important role in virulence. By interacting with the alpha chain of fibrinogen and its derivative fibrin, enhances a non-functional interaction between fibrinogen and platelets and is responsible for repression of fibrinogen-dependent platelet aggregation. In addition, assembles a fibrinogen protective shield around the bacteria which results in impaired phagocytic clearance by the host. Mechanistically, interacts with host complement C3b deposited on the surface of the bacterium via its C-terminal and then recruits fibrinogen via its N-terminal. This Staphylococcus aureus (strain MSSA476) protein is Fibrinogen-binding protein (fib).